A 320-amino-acid polypeptide reads, in one-letter code: Bifunctional protein FolD 2 (320 aa).

NADP(+) contacts are provided by residues 173 to 175 (GRS) and Ile242.

This sequence belongs to the tetrahydrofolate dehydrogenase/cyclohydrolase family. Homodimer.

It carries out the reaction (6R)-5,10-methylene-5,6,7,8-tetrahydrofolate + NADP(+) = (6R)-5,10-methenyltetrahydrofolate + NADPH. It catalyses the reaction (6R)-5,10-methenyltetrahydrofolate + H2O = (6R)-10-formyltetrahydrofolate + H(+). The protein operates within one-carbon metabolism; tetrahydrofolate interconversion. Catalyzes the oxidation of 5,10-methylenetetrahydrofolate to 5,10-methenyltetrahydrofolate and then the hydrolysis of 5,10-methenyltetrahydrofolate to 10-formyltetrahydrofolate. The chain is Bifunctional protein FolD 2 from Rubrobacter xylanophilus (strain DSM 9941 / JCM 11954 / NBRC 16129 / PRD-1).